The sequence spans 503 residues: ATP synthase subunit alpha (503 aa).

Position 169 to 176 (169 to 176) interacts with ATP; the sequence is GDRQTGKT.

It belongs to the ATPase alpha/beta chains family. As to quaternary structure, F-type ATPases have 2 components, CF(1) - the catalytic core - and CF(0) - the membrane proton channel. CF(1) has five subunits: alpha(3), beta(3), gamma(1), delta(1), epsilon(1). CF(0) has three main subunits: a(1), b(2) and c(9-12). The alpha and beta chains form an alternating ring which encloses part of the gamma chain. CF(1) is attached to CF(0) by a central stalk formed by the gamma and epsilon chains, while a peripheral stalk is formed by the delta and b chains.

The protein resides in the cell membrane. It catalyses the reaction ATP + H2O + 4 H(+)(in) = ADP + phosphate + 5 H(+)(out). In terms of biological role, produces ATP from ADP in the presence of a proton gradient across the membrane. The alpha chain is a regulatory subunit. The polypeptide is ATP synthase subunit alpha (Staphylococcus epidermidis (strain ATCC 35984 / DSM 28319 / BCRC 17069 / CCUG 31568 / BM 3577 / RP62A)).